The following is a 266-amino-acid chain: Large ribosomal subunit protein eL8 (266 aa).

Glycyl lysine isopeptide (Lys-Gly) (interchain with G-Cter in SUMO2) cross-links involve residues Lys11, Lys20, and Lys21. Position 34 is an N6-acetyllysine (Lys34). Lys48 is covalently cross-linked (Glycyl lysine isopeptide (Lys-Gly) (interchain with G-Cter in SUMO2)). N6-acetyllysine; alternate is present on Lys97. A Glycyl lysine isopeptide (Lys-Gly) (interchain with G-Cter in SUMO2); alternate cross-link involves residue Lys97. Lys125 participates in a covalent cross-link: Glycyl lysine isopeptide (Lys-Gly) (interchain with G-Cter in SUMO2). Lys217 bears the N6-acetyllysine mark. Lys245 is covalently cross-linked (Glycyl lysine isopeptide (Lys-Gly) (interchain with G-Cter in SUMO2)).

The protein belongs to the eukaryotic ribosomal protein eL8 family. In terms of assembly, component of the large ribosomal subunit. Interacts with CRY1. Interacts with DICER1, AGO2, TARBP2, MOV10 and EIF6; they form a large RNA-induced silencing complex (RISC).

The protein resides in the cytoplasm. Functionally, component of the large ribosomal subunit. The ribosome is a large ribonucleoprotein complex responsible for the synthesis of proteins in the cell. The polypeptide is Large ribosomal subunit protein eL8 (RPL7A) (Bos taurus (Bovine)).